Consider the following 405-residue polypeptide: Phosphopentomutase (405 aa).

Residues D10, D303, H308, D344, H345, and H356 each contribute to the Mn(2+) site.

This sequence belongs to the phosphopentomutase family. It depends on Mn(2+) as a cofactor.

The protein resides in the cytoplasm. It carries out the reaction 2-deoxy-alpha-D-ribose 1-phosphate = 2-deoxy-D-ribose 5-phosphate. It catalyses the reaction alpha-D-ribose 1-phosphate = D-ribose 5-phosphate. The protein operates within carbohydrate degradation; 2-deoxy-D-ribose 1-phosphate degradation; D-glyceraldehyde 3-phosphate and acetaldehyde from 2-deoxy-alpha-D-ribose 1-phosphate: step 1/2. Isomerase that catalyzes the conversion of deoxy-ribose 1-phosphate (dRib-1-P) and ribose 1-phosphate (Rib-1-P) to deoxy-ribose 5-phosphate (dRib-5-P) and ribose 5-phosphate (Rib-5-P), respectively. The polypeptide is Phosphopentomutase (Shewanella denitrificans (strain OS217 / ATCC BAA-1090 / DSM 15013)).